Here is a 737-residue protein sequence, read N- to C-terminus: Exostosin-1c (737 aa).

Over 1 to 6 the chain is Cytoplasmic; it reads MQARKK. Residues 7 to 27 form a helical; Signal-anchor for type II membrane protein membrane-spanning segment; the sequence is YVLLGLCTCCWILLYYWAGLQ. Over 28 to 737 the chain is Lumenal; the sequence is ERLLGLITHR…RKRYKDLERV (710 aa). N-linked (GlcNAc...) asparagine glycosylation is found at asparagine 194 and asparagine 322. The UDP-N-acetyl-alpha-D-glucosamine site is built by arginine 432, arginine 540, aspartate 556, glutamate 557, aspartate 558, glutamate 644, aspartate 645, and arginine 692. Position 558 (aspartate 558) interacts with Mn(2+). Residues cysteine 643 and cysteine 695 are joined by a disulfide bond. The active site involves aspartate 645.

Belongs to the glycosyltransferase 47 family. Requires Mn(2+) as cofactor.

It is found in the endoplasmic reticulum membrane. The catalysed reaction is 3-O-{[(1-&gt;4)-beta-D-GlcA-(1-&gt;4)-alpha-D-GlcNAc](n)-(1-&gt;4)-beta-D-GlcA-(1-&gt;3)-beta-D-Gal-(1-&gt;3)-beta-D-Gal-(1-&gt;4)-beta-D-Xyl}-L-seryl-[protein] + UDP-N-acetyl-alpha-D-glucosamine = 3-O-{alpha-D-GlcNAc-[(1-&gt;4)-beta-D-GlcA-(1-&gt;4)-alpha-D-GlcNAc](n)-(1-&gt;4)-beta-D-GlcA-(1-&gt;3)-beta-D-Gal-(1-&gt;3)-beta-D-Gal-(1-&gt;4)-beta-D-Xyl}-L-seryl-[protein] + UDP + H(+). It catalyses the reaction 3-O-{alpha-D-GlcNAc-[(1-&gt;4)-beta-D-GlcA-(1-&gt;4)-alpha-D-GlcNAc](n)-(1-&gt;4)-beta-D-GlcA-(1-&gt;3)-beta-D-Gal-(1-&gt;3)-beta-D-Gal-(1-&gt;4)-beta-D-Xyl}-L-seryl-[protein] + UDP-alpha-D-glucuronate = 3-O-{[(1-&gt;4)-beta-D-GlcA-(1-&gt;4)-alpha-D-GlcNAc](n+1)-(1-&gt;4)-beta-D-GlcA-(1-&gt;3)-beta-D-Gal-(1-&gt;3)-beta-D-Gal-(1-&gt;4)-beta-D-Xyl}-L-seryl-[protein] + UDP + H(+). It participates in protein modification; protein glycosylation. Functionally, glycosyltransferase required for the biosynthesis of heparan-sulfate. The sequence is that of Exostosin-1c (ext1c) from Danio rerio (Zebrafish).